We begin with the raw amino-acid sequence, 311 residues long: Glutaminase (311 aa).

Positions 69, 120, 164, 171, 195, 247, and 265 each coordinate substrate.

This sequence belongs to the glutaminase family. Homotetramer.

The enzyme catalyses L-glutamine + H2O = L-glutamate + NH4(+). The chain is Glutaminase from Colwellia psychrerythraea (strain 34H / ATCC BAA-681) (Vibrio psychroerythus).